Reading from the N-terminus, the 400-residue chain is Elongation factor Tu (400 aa).

A tr-type G domain is found at 10 to 210; it reads KPHVNVGTIG…ALDSYIPEPV (201 aa). The segment at 19–26 is G1; it reads GHVDHGKT. Residue 19 to 26 coordinates GTP; that stretch reads GHVDHGKT. Threonine 26 is a binding site for Mg(2+). A G2 region spans residues 66-70; that stretch reads ILTIA. The G3 stretch occupies residues 87–90; sequence DCPG. GTP contacts are provided by residues 87–91 and 142–145; these read DCPGH and NKCD. The interval 142–145 is G4; that stretch reads NKCD. Positions 180–182 are G5; it reads SAI.

The protein belongs to the TRAFAC class translation factor GTPase superfamily. Classic translation factor GTPase family. EF-Tu/EF-1A subfamily. In terms of assembly, monomer.

The protein localises to the cytoplasm. The enzyme catalyses GTP + H2O = GDP + phosphate + H(+). Its function is as follows. GTP hydrolase that promotes the GTP-dependent binding of aminoacyl-tRNA to the A-site of ribosomes during protein biosynthesis. The protein is Elongation factor Tu of Gemmatimonas aurantiaca (strain DSM 14586 / JCM 11422 / NBRC 100505 / T-27).